A 226-amino-acid chain; its full sequence is Transcriptional regulatory protein CitT (226 aa).

The Response regulatory domain occupies 3 to 119 (HIAIAEDDFR…KFRQVLLQYK (117 aa)). At Asp-54 the chain carries 4-aspartylphosphate. The segment at residues 178 to 197 (AEELGEKMGASRTTARRYAE) is a DNA-binding region (H-T-H motif).

In terms of processing, phosphorylated by CitS.

The protein resides in the cytoplasm. In terms of biological role, member of the two-component regulatory system CitT/CitS. Regulates the expression of the citM-yflN operon. Phosphorylated CitT binds to the citM promoter to activate the transcription of the citM-yflN operon. The chain is Transcriptional regulatory protein CitT (citT) from Bacillus subtilis (strain 168).